Reading from the N-terminus, the 493-residue chain is tRNA (uracil-5-)-methyltransferase homolog B (493 aa).

The N-terminal 14 residues, 1-14, are a transit peptide targeting the mitochondrion; sequence MHNPRLFLSRAGFF. The S-adenosyl-L-methionine site is built by Q312, E362, and N412. The active-site Nucleophile is the C440. E486 functions as the Proton acceptor in the catalytic mechanism.

It belongs to the class I-like SAM-binding methyltransferase superfamily. RNA M5U methyltransferase family.

The protein localises to the mitochondrion matrix. It carries out the reaction uridine(54) in tRNA + S-adenosyl-L-methionine = 5-methyluridine(54) in tRNA + S-adenosyl-L-homocysteine + H(+). The enzyme catalyses a uridine in 12S rRNA + S-adenosyl-L-methionine = a 5-methyluridine in 12S rRNA + S-adenosyl-L-homocysteine + H(+). Its function is as follows. Mitochondrial S-adenosyl-L-methionine-dependent methyltransferase that catalyzes the formation of 5-methyl-uridine in tRNAs and 12S rRNA. Catalyzes the methylation of uridine at position 54 (m5U54) in all tRNAs. Specifically methylates the uridine in position 425 of 12S rRNA (m5U425). Does not affect RNA stability or mitochondrial translation. This Mus musculus (Mouse) protein is tRNA (uracil-5-)-methyltransferase homolog B.